The sequence spans 82 residues: Putative membrane protein insertion efficiency factor (82 aa).

Residues 63–82 are disordered; sequence PGGHDPVPESTILSKEKSVK.

The protein belongs to the UPF0161 family.

The protein localises to the cell inner membrane. Could be involved in insertion of integral membrane proteins into the membrane. In Protochlamydia amoebophila (strain UWE25), this protein is Putative membrane protein insertion efficiency factor.